A 102-amino-acid polypeptide reads, in one-letter code: Mitochondrial import inner membrane translocase subunit Tim10 B (102 aa).

The Twin CX3C motif motif lies at C27–C51. 2 disulfide bridges follow: C27/C51 and C31/C47.

Component of the TIM22 complex, which core is composed of TIMM22, associated with TIMM10 (TIMM10A and/or TIMM10B), TIMM9, AGK and TIMM29.

The protein localises to the mitochondrion inner membrane. Component of the TIM22 complex, a complex that mediates the import and insertion of multi-pass transmembrane proteins into the mitochondrial inner membrane. The TIM22 complex forms a twin-pore translocase that uses the membrane potential as the external driving force. In the TIM22 complex, it may act as a docking point for the soluble 70 kDa complex that guides the target proteins in transit through the aqueous mitochondrial intermembrane space. The chain is Mitochondrial import inner membrane translocase subunit Tim10 B (TIMM10B) from Pongo abelii (Sumatran orangutan).